The primary structure comprises 233 residues: Pirin-like protein YhaK (233 aa).

This sequence belongs to the pirin family. Monomer.

The protein resides in the cytoplasm. Its function is as follows. Does not have quercetin 2,3-dioxygenase activity. The sequence is that of Pirin-like protein YhaK (yhaK) from Escherichia coli (strain K12).